The sequence spans 577 residues: Aspartate--tRNA(Asp/Asn) ligase (577 aa).

E171 lines the L-aspartate pocket. Residues 195–198 (QLFK) are aspartate. R217 lines the L-aspartate pocket. Residues 217–219 (RDE) and Q226 each bind ATP. Residue H444 coordinates L-aspartate. An ATP-binding site is contributed by E474. R481 contributes to the L-aspartate binding site. 526 to 529 (GFDR) contributes to the ATP binding site.

Belongs to the class-II aminoacyl-tRNA synthetase family. Type 1 subfamily. As to quaternary structure, homodimer.

It is found in the cytoplasm. It carries out the reaction tRNA(Asx) + L-aspartate + ATP = L-aspartyl-tRNA(Asx) + AMP + diphosphate. Its function is as follows. Aspartyl-tRNA synthetase with relaxed tRNA specificity since it is able to aspartylate not only its cognate tRNA(Asp) but also tRNA(Asn). Is 1.7 times more efficient at aminoacylating tRNA(Asp) over tRNA(Asn). Reaction proceeds in two steps: L-aspartate is first activated by ATP to form Asp-AMP and then transferred to the acceptor end of tRNA(Asp/Asn). This chain is Aspartate--tRNA(Asp/Asn) ligase, found in Helicobacter pylori (strain ATCC 700392 / 26695) (Campylobacter pylori).